A 239-amino-acid polypeptide reads, in one-letter code: Ribonuclease HII (239 aa).

Residues 30–221 enclose the RNase H type-2 domain; it reads GPVAGVDEVG…VRRVATRSNG (192 aa). 3 residues coordinate a divalent metal cation: Asp-36, Glu-37, and Asp-130. The interval 219 to 239 is disordered; sequence SNGAAAAEREADPPQERDGTG. A compositionally biased stretch (basic and acidic residues) spans 225 to 239; the sequence is AEREADPPQERDGTG.

The protein belongs to the RNase HII family. Mn(2+) serves as cofactor. Mg(2+) is required as a cofactor.

The protein resides in the cytoplasm. The enzyme catalyses Endonucleolytic cleavage to 5'-phosphomonoester.. Its function is as follows. Endonuclease that specifically degrades the RNA of RNA-DNA hybrids. This is Ribonuclease HII from Mycobacterium marinum (strain ATCC BAA-535 / M).